Here is a 434-residue protein sequence, read N- to C-terminus: MDYLDLGPYSSASGTVRLPGSKSISNRVLLLAALAEGETTITNLLDSDDTRVMLDALGKLGVRLTRDADTCVVAGTRGAFTARTADLFLGNAGTAVRPLTAALAVNGGDYRVHGVPRMHERPIGDLVDGLRQIGAQIDYEQNEGFPPLRIKPAAITVDAPIRVRGDVSSQFLTALLMTLPLVKAKDGKIVVEVDGELISKPYIDITIRLMERFGVTVERDGWQRFVVPAGVRYRSPGRIMVEGDASSASYFLAAGALGGGPLRVEGVGRASIQGDVGFANALMQMGANVSMGDDWIEVRGIGHDHGKLDPIDMDFNLIPDAAMTIAVAALFASGTSTLRNIASWRVKETDRIAAMATELRKLGAVVEEGPDYLVVTPPQRLTPNATIDTYDDHRMAMCFSLVSLGGVPVRINDPKCVGKTFPDYFDRFAALAKA.

3 residues coordinate 3-phosphoshikimate: K22, S23, and R27. K22 provides a ligand contact to phosphoenolpyruvate. Residues G93 and R121 each coordinate phosphoenolpyruvate. 3-phosphoshikimate is bound by residues S168, S169, Q170, S199, D320, and K347. Q170 lines the phosphoenolpyruvate pocket. D320 (proton acceptor) is an active-site residue. Residues R351, R394, and K419 each contribute to the phosphoenolpyruvate site.

This sequence belongs to the EPSP synthase family. As to quaternary structure, monomer.

It localises to the cytoplasm. It carries out the reaction 3-phosphoshikimate + phosphoenolpyruvate = 5-O-(1-carboxyvinyl)-3-phosphoshikimate + phosphate. It functions in the pathway metabolic intermediate biosynthesis; chorismate biosynthesis; chorismate from D-erythrose 4-phosphate and phosphoenolpyruvate: step 6/7. Functionally, catalyzes the transfer of the enolpyruvyl moiety of phosphoenolpyruvate (PEP) to the 5-hydroxyl of shikimate-3-phosphate (S3P) to produce enolpyruvyl shikimate-3-phosphate and inorganic phosphate. This chain is 3-phosphoshikimate 1-carboxyvinyltransferase, found in Burkholderia vietnamiensis (strain G4 / LMG 22486) (Burkholderia cepacia (strain R1808)).